The following is a 589-amino-acid chain: Complement component C8 beta chain (589 aa).

An N-terminal signal peptide occupies residues 1–31 (MKIGAQVWRALAKSCLLCATLGCLHFPGSRG). A propeptide spanning residues 32 to 53 (GKPDFFETKAVNGSLVKSRPVR) is cleaved from the precursor. A glycan (N-linked (GlcNAc...) asparagine) is linked at Asn-43. In terms of domain architecture, TSP type-1 1 spans 63-116 (DCELSTWSSWTACDPCQKKRYRHTYLLRPSQFYGELCDLSDKEVEDCVTNQPCR). Intrachain disulfides connect Cys-64/Cys-99, Cys-75/Cys-109, Cys-78/Cys-115, Cys-121/Cys-132, Cys-126/Cys-145, Cys-139/Cys-154, and Cys-161/Cys-199. Trp-69 and Trp-72 each carry a C-linked (Man) tryptophan glycan. The LDL-receptor class A domain occupies 120–155 (RCEGFVCAQTGRCVNRRLLCNGDNDCGDQSDEANCR). Ca(2+) is bound by residues Leu-137, Asn-140, Asp-142, Asp-144, Asp-150, and Glu-151. Residues 157 to 503 (IYKNCQREME…EFQSEVSSCR (347 aa)) enclose the MACPF domain. A run of 8 beta stranded transmembrane segments spans residues 201-206 (PHYILD), 209-213 (FRKPY), 251-258 (FNFTSGFK), 261-268 (GVMDLGIK), 328-335 (SYGEYRDL), 338-343 (DFGTHF), 378-385 (AGGSFGIG), and 391-398 (VYVKVGVS). Cys-377 and Cys-402 form a disulfide bridge. One can recognise an EGF-like domain in the interval 404-534 (DIMKEINERN…PGGFQGTACE (131 aa)). Thr-417 is subject to Phosphothreonine. 4 cysteine pairs are disulfide-bonded: Cys-502-Cys-549, Cys-504-Cys-520, Cys-507-Cys-522, and Cys-524-Cys-533. The 44-residue stretch at 544–587 (DGKWSCWSDWSACSGGHKTRHRQCNNPAPHKGGSPCSGPASETL) folds into the TSP type-1 2 domain. Residues Trp-550 and Trp-553 are each glycosylated (C-linked (Man) tryptophan). Residues Cys-556 and Cys-589 are joined by a disulfide bond. Positions 570-589 (PAPHKGGSPCSGPASETLNC) are disordered.

The protein belongs to the complement C6/C7/C8/C9 family. Heterotrimer of 3 chains: alpha (C8A), beta (C8B) and gamma (C8G); the alpha and gamma chains are disulfide bonded. Component of the membrane attack complex (MAC), composed of complement C5b, C6, C7, C8A, C8B, C8G and multiple copies of the pore-forming subunit C9. N-glycosylated; contains one or two bound glycans. Not O-glycosylated.

It localises to the secreted. The protein localises to the target cell membrane. Its activity is regulated as follows. Membrane attack complex (MAC) assembly is inhibited by CD59, thereby protecting self-cells from damage during complement activation. CD59 acts by binding to the beta-haipins of C8 (C8A and C8B), forming an intermolecular beta-sheet that prevents incorporation of the multiple copies of C9 required for complete formation of the osmolytic pore. MAC assembly is also inhibited by clusterin (CLU) chaperones that inhibit polymerization of C9. Functionally, component of the membrane attack complex (MAC), a multiprotein complex activated by the complement cascade, which inserts into a target cell membrane and forms a pore, leading to target cell membrane rupture and cell lysis. The MAC is initiated by proteolytic cleavage of C5 into complement C5b in response to the classical, alternative, lectin and GZMK complement pathways. The complement pathways consist in a cascade of proteins that leads to phagocytosis and breakdown of pathogens and signaling that strengthens the adaptive immune system. C8B, together with C8A and C8G, inserts into the target membrane, but does not form pores by itself. During MAC assembly, associates with C5b, C6 and C7 to form the C5b8 intermediate complex that inserts into the target membrane and traverses the bilayer increasing membrane rigidity. In Mus musculus (Mouse), this protein is Complement component C8 beta chain (C8b).